The primary structure comprises 414 residues: Histidine--tRNA ligase (414 aa).

This sequence belongs to the class-II aminoacyl-tRNA synthetase family. As to quaternary structure, homodimer.

It localises to the cytoplasm. The enzyme catalyses tRNA(His) + L-histidine + ATP = L-histidyl-tRNA(His) + AMP + diphosphate + H(+). This is Histidine--tRNA ligase from Anaeromyxobacter sp. (strain K).